A 484-amino-acid polypeptide reads, in one-letter code: UDP-N-acetylmuramoyl-L-alanyl-D-glutamate--2,6-diaminopimelate ligase (484 aa).

Residue 110-116 (GTNGKTT) coordinates ATP. UDP-N-acetyl-alpha-D-muramoyl-L-alanyl-D-glutamate contacts are provided by residues 152-153 (TT), S179, and R187. K219 is modified (N6-carboxylysine). Meso-2,6-diaminopimelate contacts are provided by residues R381, 405–408 (DNPR), G455, and E459. The Meso-diaminopimelate recognition motif signature appears at 405–408 (DNPR).

This sequence belongs to the MurCDEF family. MurE subfamily. Requires Mg(2+) as cofactor. Post-translationally, carboxylation is probably crucial for Mg(2+) binding and, consequently, for the gamma-phosphate positioning of ATP.

It localises to the cytoplasm. It catalyses the reaction UDP-N-acetyl-alpha-D-muramoyl-L-alanyl-D-glutamate + meso-2,6-diaminopimelate + ATP = UDP-N-acetyl-alpha-D-muramoyl-L-alanyl-gamma-D-glutamyl-meso-2,6-diaminopimelate + ADP + phosphate + H(+). The protein operates within cell wall biogenesis; peptidoglycan biosynthesis. Its function is as follows. Catalyzes the addition of meso-diaminopimelic acid to the nucleotide precursor UDP-N-acetylmuramoyl-L-alanyl-D-glutamate (UMAG) in the biosynthesis of bacterial cell-wall peptidoglycan. In Clostridium perfringens (strain 13 / Type A), this protein is UDP-N-acetylmuramoyl-L-alanyl-D-glutamate--2,6-diaminopimelate ligase.